The chain runs to 414 residues: Lysocardiolipin acyltransferase 1 (414 aa).

The next 2 membrane-spanning stretches (helical) occupy residues 47 to 67 and 86 to 106; these read FILT…SPFL and ATWL…KVII. The HXXXXD motif motif lies at 123–128; the sequence is HRTRMD. Residue lysine 221 is modified to N6-acetyllysine. The next 2 membrane-spanning stretches (helical) occupy residues 340–360 and 362–382; these read LRVL…SPAM and LLIY…VIFV.

It belongs to the 1-acyl-sn-glycerol-3-phosphate acyltransferase family. Expressed at higher level in heart, kidney and pancreas than in brain, spleen, liver, lung, small intestine and placenta.

Its subcellular location is the endoplasmic reticulum membrane. The enzyme catalyses a 1-acyl-sn-glycero-3-phosphate + an acyl-CoA = a 1,2-diacyl-sn-glycero-3-phosphate + CoA. It catalyses the reaction a 1-acyl-sn-glycero-3-phospho-(1D-myo-inositol) + an acyl-CoA = a 1,2-diacyl-sn-glycero-3-phospho-(1D-myo-inositol) + CoA. It carries out the reaction 1-acyl-sn-glycero-3-phospho-(1'-sn-glycerol) + an acyl-CoA = a 1,2-diacyl-sn-glycero-3-phospho-(1'-sn-glycerol) + CoA. The catalysed reaction is 1-hexadecanoyl-sn-glycero-3-phosphate + (9Z)-octadecenoyl-CoA = 1-hexadecanoyl-2-(9Z-octadecenoyl)-sn-glycero-3-phosphate + CoA. The enzyme catalyses 1-(9Z-octadecenoyl)-sn-glycero-3-phosphate + (9Z)-octadecenoyl-CoA = 1,2-di-(9Z-octadecenoyl)-sn-glycero-3-phosphate + CoA. It catalyses the reaction 1-(9Z,12Z)-octadecadienoyl-sn-glycero-3-phosphate + (9Z)-octadecenoyl-CoA = 1-(9Z,12Z)-octadecadienoyl-2-(9Z)-octadecenoyl-sn-glycero-3-phosphate + CoA. It carries out the reaction 1-(9Z,12Z,15Z)-octadecatrienoyl-sn-glycero-3-phosphate + (9Z)-octadecenoyl-CoA = 1-(9Z,12Z,15Z)-octadecatrienoyl-2-(9Z)-octadecenoyl-sn-glycero-3-phosphate + CoA. The catalysed reaction is 1-(9Z-octadecenoyl)-sn-glycero-3-phosphate + hexadecanoyl-CoA = 1-(9Z)-octadecenoyl-2-hexadecanoyl-sn-glycero-3-phosphate + CoA. The enzyme catalyses 1-(9Z-octadecenoyl)-sn-glycero-3-phosphate + octadecanoyl-CoA = 1-(9Z-octadecenoyl)-2-octadecanoyl-sn-glycero-3-phosphate + CoA. It catalyses the reaction 1-acyl-sn-glycero-3-phospho-(1'-sn-glycerol) + (9Z)-octadecenoyl-CoA = 1-acyl-2-(9Z-octadecenoyl)-sn-glycero-3-phospho-(1'-sn-glycerol) + CoA. It carries out the reaction a 1-acyl-sn-glycero-3-phospho-(1D-myo-inositol) + (9Z)-octadecenoyl-CoA = a 1-acyl-2-(9Z-octadecenoyl)-sn-glycero-3-phospho-(1D-myo-inositol) + CoA. The catalysed reaction is 1-hexadecanoyl-sn-glycero-3-phospho-(1D-myo-inositol) + hexadecanoyl-CoA = 1,2-dihexadecanoyl-sn-glycero-3-phospho-(1D-myo-inositol) + CoA. The enzyme catalyses 1-hexadecanoyl-sn-glycero-3-phospho-(1D-myo-inositol) + octadecanoyl-CoA = 1-hexadecanoyl-2-octadecanoyl-sn-glycero-3-phospho-(1D-myo-inositol) + CoA. It catalyses the reaction 1-hexadecanoyl-sn-glycero-3-phospho-(1D-myo-inositol) + (9Z)-octadecenoyl-CoA = 1-hexadecanoyl-2-(9Z-octadecenoyl)-sn-glycero-3-phospho-(1D-myo-inositol) + CoA. It carries out the reaction 1-hexadecanoyl-sn-glycero-3-phospho-(1D-myo-inositol) + (9Z,12Z)-octadecadienoyl-CoA = 1-hexadecanoyl-2-(9Z,12Z-octadecadienoyl)-sn-glycero-3-phospho-(1D-myo-inositol) + CoA. The catalysed reaction is 1-hexadecanoyl-sn-glycero-3-phospho-(1D-myo-inositol) + (5Z,8Z,11Z,14Z)-eicosatetraenoyl-CoA = 1-hexadecanoyl-2-(5Z,8Z,11Z,14Z-eicosatetraenoyl)-sn-glycero-3-phospho-D-myo-inositol + CoA. The enzyme catalyses 1-hexadecanoyl-sn-glycero-3-phospho-(1'-sn-glycerol) + hexadecanoyl-CoA = 1,2-dihexadecanoyl-sn-glycero-3-phospho-(1'-sn-glycerol) + CoA. It catalyses the reaction 1-hexadecanoyl-sn-glycero-3-phospho-(1'-sn-glycerol) + octadecanoyl-CoA = 1-hexadecanoyl-2-octadecanoyl-sn-glycero-3-phospho-(1'-sn-glycerol) + CoA. It carries out the reaction 1-hexadecanoyl-sn-glycero-3-phospho-(1'-sn-glycerol) + (9Z)-octadecenoyl-CoA = 1-hexadecanoyl-2-(9Z-octadecenoyl)-sn-glycero-3-phospho-(1'-sn-glycerol) + CoA. The catalysed reaction is 1-hexadecanoyl-sn-glycero-3-phospho-(1'-sn-glycerol) + (9Z,12Z)-octadecadienoyl-CoA = 1-hexadecanoyl-2-(9Z,12Z-octadecadienoyl)-sn-glycero-3-phospho-(1'-sn-glycerol) + CoA. The enzyme catalyses 1-tetradecanoyl-sn-glycero-3-phospho-(1'-sn-glycerol) + (9Z)-octadecenoyl-CoA = 1-tetradecanoyl-2-(9Z-octadecenoyl)-sn-glycero-3-phospho-(1'-sn-glycerol) + CoA. It catalyses the reaction 1-octadecanoyl-sn-glycero-3-phospho-(1'-sn-glycerol) + (9Z)-octadecenoyl-CoA = 1-octadecanoyl-2-(9Z-octadecenoyl)-sn-glycero-3-phospho-(1'-sn-glycerol) + CoA. It carries out the reaction 1-(9Z-octadecenoyl)-sn-glycero-3-phospho-(1'-sn-glycerol) + (9Z)-octadecenoyl-CoA = 1,2-di-(9Z-octadecenoyl)-sn-glycero-3-phospho-(1'-sn-glycerol) + CoA. The catalysed reaction is 1-hexadecanoyl-sn-glycero-3-phospho-(1D-myo-inositol) + dodecanoyl-CoA = 1-hexadecanoyl-2-dodecanoyl-sn-glycero-3-phospho-(1D-myo-inositol) + CoA. The enzyme catalyses 1',3'-bis-[1-acyl-sn-glycero-3-phospho]-glycerol + (9Z)-octadecenoyl-CoA = 1'-[1-acyl-2-(9Z)-octadecenoyl-sn-glycero-3-phospho],3'-[1-acyl,2-hydroxy-sn-glycero-3-phospho]-glycerol + CoA. It catalyses the reaction 1'-[1,2-diacyl-sn-glycero-3-phospho],3'-[1-acyl-sn-glycero-3-phospho]-glycerol + (9Z)-octadecenoyl-CoA = 1'-[1,2-diacyl-sn-glycero-3-phospho],3'-[1-acyl,2-(9Z)-octadecenoyl-sn-glycero-3-phospho]-glycerol + CoA. It carries out the reaction 1'-[1,2-diacyl-sn-glycero-3-phospho],3'-[1-acyl-sn-glycero-3-phospho]-glycerol + (9Z,12Z)-octadecadienoyl-CoA = 1'-[1,2-diacyl-sn-glycero-3-phospho],3'-[1-acyl,2-(9Z,12Z)-octadecadienoyl-sn-glycero-3-phospho]-glycerol + CoA. The catalysed reaction is 1'-[1,2-diacyl-sn-glycero-3-phospho],3'-[1-acyl-sn-glycero-3-phospho]-glycerol + dodecanoyl-CoA = 1'-[1,2-diacyl-sn-glycero-3-phospho],3'-[1-acyl,2-dodecanoyl-sn-glycero-3-phospho]-glycerol + CoA. The enzyme catalyses 1',3'-bis-[1-acyl-sn-glycero-3-phospho]-glycerol + dodecanoyl-CoA = 1'-[1-acyl-2-dodecanoyl-sn-glycero-3-phospho],3'-[1-acyl,2-hydroxy-sn-glycero-3-phospho]-glycerol + CoA. It catalyses the reaction a 1-acyl-sn-glycero-3-phosphate + (9Z)-octadecenoyl-CoA = a 1-acyl-2-(9Z-octadecenoyl)-sn-glycero-3-phosphate + CoA. It carries out the reaction 1',3'-bis-[1-acyl-sn-glycero-3-phospho]-glycerol + (9Z,12Z)-octadecadienoyl-CoA = 1'-[1-acyl-2-(9Z,12Z)-octadecadienoyl-sn-glycero-3-phospho],3'-[1-acyl,2-hydroxy-sn-glycero-3-phospho]-glycerol + CoA. The catalysed reaction is 1',3'-bis-[1-acyl-sn-glycero-3-phospho]-glycerol + hexadecanoyl-CoA = 1'-[1-acyl-2-hexadecanoyl-sn-glycero-3-phospho],3'-[1-acyl,2-hydroxy-sn-glycero-3-phospho]-glycerol + CoA. The enzyme catalyses 1',3'-bis-[1-acyl-sn-glycero-3-phospho]-glycerol + octadecanoyl-CoA = 1'-[1-acyl-2-octadecanoyl-sn-glycero-3-phospho],3'-[1-acyl,2-hydroxy-sn-glycero-3-phospho]-glycerol + CoA. It catalyses the reaction 1'-[1,2-diacyl-sn-glycero-3-phospho],3'-[1-acyl-sn-glycero-3-phospho]-glycerol + octanoyl-CoA = 1'-[1,2-diacyl-sn-glycero-3-phospho],3'-[1-acyl,2-octanoyl-sn-glycero-3-phospho]-glycerol + CoA. It carries out the reaction 1',3'-bis-[1-acyl-sn-glycero-3-phospho]-glycerol + octanoyl-CoA = 1'-[1-acyl-2-octanoyl-sn-glycero-3-phospho],3'-[1-acyl,2-hydroxy-sn-glycero-3-phospho]-glycerol + CoA. The catalysed reaction is 1'-[1,2-diacyl-sn-glycero-3-phospho],3'-[1-acyl-sn-glycero-3-phospho]-glycerol + hexadecanoyl-CoA = 1'-[1,2-diacyl-sn-glycero-3-phospho],3'-[1-acyl,2-hexadecanoyl-sn-glycero-3-phospho]-glycerol + CoA. The enzyme catalyses 1'-[1,2-diacyl-sn-glycero-3-phospho],3'-[1-acyl-sn-glycero-3-phospho]-glycerol + (5Z,8Z,11Z,14Z)-eicosatetraenoyl-CoA = 1'-[1,2-diacyl-sn-glycero-3-phospho],3'-[1-acyl,2-(5Z,8Z,11Z,14Z)-eicosatetraenoyl-sn-glycero-3-phospho]-glycerol + CoA. It catalyses the reaction 1',3'-bis-[1-acyl-sn-glycero-3-phospho]-glycerol + (5Z,8Z,11Z,14Z)-eicosatetraenoyl-CoA = 1'-[1-acyl-2-(5Z,8Z,11Z,14Z)-eicosatetraenoyl-sn-glycero-3-phospho],3'-[1-acyl,2-hydroxy-sn-glycero-3-phospho]-glycerol + CoA. It carries out the reaction a 1-acyl-sn-glycero-3-phospho-(1D-myo-inositol) + octadecanoyl-CoA = a 1-acyl-2-octadecanoyl-sn-glycero-3-phospho-(1D-myo-inositol) + CoA. The catalysed reaction is a 2-acyl-sn-glycero-3-phospho-D-myo-inositol + octadecanoyl-CoA = 1-octadecanoyl-2-acyl-sn-glycero-3-phospho-1D-myo-inositol + CoA. Its pathway is phospholipid metabolism; CDP-diacylglycerol biosynthesis; CDP-diacylglycerol from sn-glycerol 3-phosphate: step 2/3. Functionally, exhibits acyl-CoA:lysocardiolipin acyltransferase (ALCAT) activity; catalyzes the reacylation of lyso-cardiolipin to cardiolipin (CL), a key step in CL remodeling. Recognizes both monolysocardiolipin and dilysocardiolipin as substrates with a preference for linoleoyl-CoA and oleoyl-CoA as acyl donors. Also exhibits 1-acyl-sn-glycerol-3-phosphate acyltransferase activity (AGPAT) activity; converts 1-acyl-sn-glycerol-3- phosphate (lysophosphatidic acid or LPA) into 1,2-diacyl-sn-glycerol-3- phosphate (phosphatidic acid or PA) by incorporating an acyl moiety at the sn-2 position of the glycerol backbone. Possesses both lysophosphatidylinositol acyltransferase (LPIAT) and lysophosphatidylglycerol acyltransferase (LPGAT) activities. Required for establishment of the hematopoietic and endothelial lineages. The sequence is that of Lysocardiolipin acyltransferase 1 (LCLAT1) from Homo sapiens (Human).